The sequence spans 284 residues: Putative ABC transporter ATP-binding protein MG468.1 homolog (284 aa).

The region spanning 53 to 284 (VLFKGVCKAV…PKTINEINWV (232 aa)) is the ABC transporter domain. Residue 89 to 96 (GKSGSGKT) coordinates ATP.

This sequence belongs to the ABC transporter superfamily.

The protein is Putative ABC transporter ATP-binding protein MG468.1 homolog of Mycoplasma pneumoniae (strain ATCC 29342 / M129 / Subtype 1) (Mycoplasmoides pneumoniae).